We begin with the raw amino-acid sequence, 211 residues long: Transcriptional regulatory protein RcsA (211 aa).

The region spanning 135-200 is the HTH luxR-type domain; sequence LDVHPLTLSQ…VIYHVVRLTD (66 aa). The H-T-H motif DNA-binding region spans 159-178; the sequence is TIQISDKMQIKAKTVSSHKG.

The protein belongs to the RcsA family.

Functionally, component of the Rcs signaling system, which controls transcription of numerous genes. Binds to DNA to regulate expression of genes. The sequence is that of Transcriptional regulatory protein RcsA from Pantoea stewartii subsp. stewartii (Erwinia stewartii).